A 592-amino-acid polypeptide reads, in one-letter code: NADH-quinone oxidoreductase subunit C/D (592 aa).

The NADH dehydrogenase I subunit C stretch occupies residues M1 to E183. Residues D207–R592 are NADH dehydrogenase I subunit D.

In the N-terminal section; belongs to the complex I 30 kDa subunit family. The protein in the C-terminal section; belongs to the complex I 49 kDa subunit family. As to quaternary structure, NDH-1 is composed of 13 different subunits. Subunits NuoB, CD, E, F, and G constitute the peripheral sector of the complex.

Its subcellular location is the cell inner membrane. It catalyses the reaction a quinone + NADH + 5 H(+)(in) = a quinol + NAD(+) + 4 H(+)(out). In terms of biological role, NDH-1 shuttles electrons from NADH, via FMN and iron-sulfur (Fe-S) centers, to quinones in the respiratory chain. The immediate electron acceptor for the enzyme in this species is believed to be ubiquinone. Couples the redox reaction to proton translocation (for every two electrons transferred, four hydrogen ions are translocated across the cytoplasmic membrane), and thus conserves the redox energy in a proton gradient. The polypeptide is NADH-quinone oxidoreductase subunit C/D (Acidiphilium cryptum (strain JF-5)).